The following is a 1958-amino-acid chain: MFTKKSHADVKKSTAKLQDSKKDSASRLRHLRMILDNVELEESKCLFETNYSHVYFILYDTFIQAEANLKQKVHKAHREELDGSLWLLEKILCLLPELLARRWQCHSLSRIMAKLLHLGNSPKLRREGVRYFLLWYQTLGENAPGYVHAMYADLIPGLIVPQKGVVGPDTEFSASDFLTHPNMKADGGMASVFHDNAFSHPVQSSEVVALLPPSSSEKSAPPDPRDGLEVLLNSMVHTAACLRWRDNRAQKDHRAFAFLLQRFMDVFLPVFSPNFDVSCSIYNPRLDLPVMRSINKKEEVMASCVVVLINWVSRFTHERLLSHRLDCTLHIEDVDQVRLHGYQQGLIVRDVLYVNRENINFVHEVYRQAFLLNFTSKPQIEAIRTAIAVYRDWMTGETPPPFLLEPNDDPPPPSNAGGTPRSQRLRTPSYVGAIAGSKDQLVVRAGRQNVLQVFVTNAANVFLVNTANLNICFPTRSRSYRSTPLEEQTEICKKVLNVYRTMVMNTEMDTRTWEQLLMVLLQVTSIVLHQNQHTLPSGTNKSATLGGILGSAIFQTLIVTWIRAHTKVPVNVLLWEKFLNVLQSLTHREELIIEWNKTIQTLTRVFSRYTYGINLLDLPLDRVAESRAEKRRRIGSVWQGSGSNSAANGGSAASAAISQNRQRESLAESSSSRSEETSSQVPLPNHPRPHHQHTQSQGGTGHGTRPIPLTPMLSRSYSEGSLASAARSSRIRRRRAATPKPKALQPSQLAENRINPQDLRRAMSLDSLARKGDAEETDSYQEGDNESGAGSRSPSPTASSGIEGGSIKDAQLQIDASLDDANSGSYGSGSNSGSISGRRCIILGGSAEGWHPDSTSIMWKRMLGALGDVNRIPKADLHAQVFMHLLEMTQNLIKIKQNQGISTDNQNTQPMPPLVPPIGIVAPWCYGSLSLDRSFKKGKLWALQLLCSLAIQGAVNMQQLPLFYHALHQLLTGEDRDLIYAILKHLEGPRLLSLLLPGHTLLLLDLVHASAILLTSLEVSRSTPRAEVAALLGSLLCYPSSLLTRSVLQPTPQKFELMECSDLQDHILNIVLRCARREPSAKARCIALSQLGQWLLMRLSQPLPASNSGRANLFQQAVPHHKDVHPKASSVYNPRIKEVLQVLLQALQFKHHTIAIVAVDSLKLCAERGRQLAAIERVPQLIITAICKALEIQSVTKPKDSDKVVLTSLMLCLGEFCMAIPAPIMLTPFNEQGDTLVLQVLRVLLQVASGAPRHERVKLTADDDFDMHIAHDDLQGDGRLPEATYQTSETIQKCITAIKLCAKAVSMHLVTHIGHFPMGIGASRLSSMVEEQDDIGNAAYGGQVETRRDSVELPSVVSAQNMQLFMLNSGLVASFIELPTLKLPGGGITAGLVTADKQVRVLMRDLNGKACWDASILYSEPRNAEEPPKTTPKIQHSQPLDSMATSMVTHTPSPRHTLRHRPAGVLPLAKDMAPDLDQLDDMLAYIGHTSPECVAPTVSQLNAPTASPLSGNQEAQAISVILNQRLLEQEFVTHSTQAPSPALRHASSNSSLQQPDQRSLHSTTASFDSLPTRTEMPFQYCRLLFSHLGLAGWERRSRTHLLQRSEKLMRELRNVDLQKCRETHKMAVIYVAAGQEDKGSILRNTSGSSTYEMFVSALGWEIDLETHNGFLGGLPRQGCGATAPYYATPFLEVVYHVATRMPSDSSEAMLLKTRHLGNDEVHIVWSEHNRDYRRDILPTEFCDVLIVVYPLRNGLFRVTVNRKPEVPWFGPLANESVVSGACLATLIRATAINASRTKRAALPLYQQFYEERNRSLDSVSSRYKESTTFEDFASRIYNPMPLSTLGTLRESNASSSAAPLASALLDHNRASVKGWVQASIDSGPIMGIAPSASAGSTAAMEAATGMSSASPRGPRKLGAPFKSVTKKHSLQHIAVGGGAGAGGDTPPESPTLPQRRFK.

Disordered stretches follow at residues 1-21 (MFTK…QDSK), 400-424 (PPFL…RSQR), and 635-804 (GSVW…GIEG). Positions 400 to 414 (PPFLLEPNDDPPPPS) are enriched in pro residues. The segment covering 640–656 (GSGSNSAANGGSAASAA) has biased composition (low complexity). Phosphoserine occurs at positions 718, 764, and 767. Positions 758 to 774 (DLRRAMSLDSLARKGDA) are enriched in basic and acidic residues. Over residues 775–785 (EETDSYQEGDN) the composition is skewed to acidic residues. Phosphoserine is present on residues S787, S791, S793, and S795. Residues 788 to 800 (GAGSRSPSPTASS) show a composition bias toward polar residues. The residue at position 980 (Y980) is a Phosphotyrosine. Residues 1534 to 1568 (HSTQAPSPALRHASSNSSLQQPDQRSLHSTTASFD) form a disordered region. Residues 1546-1568 (ASSNSSLQQPDQRSLHSTTASFD) are compositionally biased toward polar residues. A Phosphoserine modification is found at S1551. The 208-residue stretch at 1612 to 1819 (LRNVDLQKCR…EERNRSLDSV (208 aa)) folds into the Rap-GAP domain. A disordered region spans residues 1903–1958 (ATGMSSASPRGPRKLGAPFKSVTKKHSLQHIAVGGGAGAGGDTPPESPTLPQRRFK). At T1945 the chain carries Phosphothreonine. At S1949 the chain carries Phosphoserine.

The polypeptide is Probable Rho GTPase-activating protein CG5521 (Drosophila melanogaster (Fruit fly)).